We begin with the raw amino-acid sequence, 372 residues long: Cytochrome b (372 aa).

Transmembrane regions (helical) follow at residues F25–I45, W69–I90, W105–L125, and F170–I190. Heme b contacts are provided by H75 and H89. Heme b contacts are provided by H174 and H188. H193 lines the a ubiquinone pocket. A run of 4 helical transmembrane segments spans residues Y218–S238, L280–H300, L312–S332, and F339–P358.

This sequence belongs to the cytochrome b family. The cytochrome bc1 complex contains 3 respiratory subunits (MT-CYB, CYC1 and UQCRFS1), 2 core proteins (UQCRC1 and UQCRC2) and probably 6 low-molecular weight proteins. Requires heme b as cofactor.

The protein resides in the mitochondrion inner membrane. In terms of biological role, component of the ubiquinol-cytochrome c reductase complex (complex III or cytochrome b-c1 complex) that is part of the mitochondrial respiratory chain. The b-c1 complex mediates electron transfer from ubiquinol to cytochrome c. Contributes to the generation of a proton gradient across the mitochondrial membrane that is then used for ATP synthesis. The chain is Cytochrome b (MT-CYB) from Naja annulata annulata (Banded water cobra).